The chain runs to 81 residues: U-poneritoxin(01)-Om2a (81 aa).

The N-terminal stretch at 1 to 25 is a signal peptide; that stretch reads MKPSGITFAFLVVFMMAIMYNSVQA. The propeptide occupies 26–47; that stretch reads AAIADADADAEAKAFADAFAEA.

It belongs to the formicidae venom precursor-01 superfamily. Truncated sequences of this peptide have also been found in the venom. It is possible they have been cleaved in the venom. As to expression, expressed by the venom gland.

It localises to the secreted. Functionally, cationic amphipathic alpha-helical peptide with antimicrobial activities against E.coli (MIC=6.2 uM), S.aureus (MIC=6.2 uM), and S.cerevisiae (MIC=50 uM). Also shows histamine-releasing activity (30.1% at 10 uM) and a weak hemolytic activity (10.4% at 50 uM). The chain is U-poneritoxin(01)-Om2a from Odontomachus monticola (Trap-jaw ant).